The following is a 686-amino-acid chain: DNA gyrase subunit B (686 aa).

Residues 1–27 (MADSGNPNENNPSTDTGVNDAVSTSHG) show a composition bias toward polar residues. Positions 1-29 (MADSGNPNENNPSTDTGVNDAVSTSHGDA) are disordered. Positions 465 to 579 (CEIFIVEGDS…SGHVYLSRPP (115 aa)) constitute a Toprim domain. Mg(2+) is bound by residues E471, D544, and D546.

This sequence belongs to the type II topoisomerase GyrB family. Heterotetramer, composed of two GyrA and two GyrB chains. In the heterotetramer, GyrA contains the active site tyrosine that forms a transient covalent intermediate with DNA, while GyrB binds cofactors and catalyzes ATP hydrolysis. Mg(2+) serves as cofactor. The cofactor is Mn(2+). Requires Ca(2+) as cofactor.

The protein localises to the cytoplasm. It carries out the reaction ATP-dependent breakage, passage and rejoining of double-stranded DNA.. A type II topoisomerase that negatively supercoils closed circular double-stranded (ds) DNA in an ATP-dependent manner to modulate DNA topology and maintain chromosomes in an underwound state. Negative supercoiling favors strand separation, and DNA replication, transcription, recombination and repair, all of which involve strand separation. Also able to catalyze the interconversion of other topological isomers of dsDNA rings, including catenanes and knotted rings. Type II topoisomerases break and join 2 DNA strands simultaneously in an ATP-dependent manner. The sequence is that of DNA gyrase subunit B from Streptomyces coelicolor (strain ATCC BAA-471 / A3(2) / M145).